The chain runs to 725 residues: ABC transporter G family member 19 (725 aa).

One can recognise an ABC transporter domain in the interval 73–325 (LNFNNLQYDV…FSDFGRPIPE (253 aa)). 117-124 (GASGAGKS) lines the ATP pocket. Residues 419–629 (FETFILAKRY…PYEAVLINEF (211 aa)) enclose the ABC transmembrane type-2 domain. A run of 7 helical transmembrane segments spans residues 438–458 (LVGT…TVYW), 473–493 (LFAF…PVFI), 515–535 (ISHS…FSAI), 537–557 (FWTV…LLIY), 577–597 (IMLC…LSGF), 606–626 (FYWT…AVLI), and 698–718 (LWIT…ALLF).

It belongs to the ABC transporter superfamily. ABCG family. Eye pigment precursor importer (TC 3.A.1.204) subfamily.

The protein localises to the vacuole membrane. In terms of biological role, confers selective resistance to kanamycin. This Arabidopsis thaliana (Mouse-ear cress) protein is ABC transporter G family member 19 (ABCG19).